The primary structure comprises 627 residues: Glutamine--fructose-6-phosphate aminotransferase [isomerizing] (627 aa).

The active-site Nucleophile; for GATase activity is C2. One can recognise a Glutamine amidotransferase type-2 domain in the interval 2–224 (CGIVGYIGTQ…NGEIARLTPL (223 aa)). 2 SIS domains span residues 293-442 (LPEN…HRQT) and 476-617 (LAHE…VDQP). The active-site For Fru-6P isomerization activity is the K622.

As to quaternary structure, homodimer.

It is found in the cytoplasm. The catalysed reaction is D-fructose 6-phosphate + L-glutamine = D-glucosamine 6-phosphate + L-glutamate. In terms of biological role, catalyzes the first step in hexosamine metabolism, converting fructose-6P into glucosamine-6P using glutamine as a nitrogen source. The chain is Glutamine--fructose-6-phosphate aminotransferase [isomerizing] from Nostoc sp. (strain PCC 9229).